A 335-amino-acid polypeptide reads, in one-letter code: Methionine import ATP-binding protein MetN (335 aa).

Residues 2–241 (IQFQRLHKSY…PQHPTTRRFV (240 aa)) enclose the ABC transporter domain. 38 to 45 (GHSGAGKS) contacts ATP.

Belongs to the ABC transporter superfamily. Methionine importer (TC 3.A.1.24) family. In terms of assembly, the complex is composed of two ATP-binding proteins (MetN), two transmembrane proteins (MetI) and a solute-binding protein (MetQ).

The protein resides in the cell inner membrane. It catalyses the reaction L-methionine(out) + ATP + H2O = L-methionine(in) + ADP + phosphate + H(+). The catalysed reaction is D-methionine(out) + ATP + H2O = D-methionine(in) + ADP + phosphate + H(+). Part of the ABC transporter complex MetNIQ involved in methionine import. Responsible for energy coupling to the transport system. In Xanthomonas campestris pv. campestris (strain 8004), this protein is Methionine import ATP-binding protein MetN.